A 243-amino-acid chain; its full sequence is Cytochrome c oxidase subunit 2 (243 aa).

The Mitochondrial intermembrane segment spans residues 1–34; it reads MNNIIHNDAPTPWGIYFQDGASPVYDGIVELHDQ. The helical transmembrane segment at 35 to 55 threads the bilayer; sequence VLFYLLIVLVGVSWILFSTIL. Topologically, residues 56–74 are mitochondrial matrix; sequence RFRGSGIVHKYHNHSTTIE. A helical membrane pass occupies residues 75–97; sequence FVWTVSPALLLIAIAFPSFKLLY. Residues 98 to 243 lie on the Mitochondrial intermembrane side of the membrane; the sequence is LMDEVIDPSI…EKFLSWLDNQ (146 aa). Residues His178, Cys213, Glu215, Cys217, His221, and Met224 each contribute to the Cu cation site. Glu215 provides a ligand contact to Mg(2+).

Belongs to the cytochrome c oxidase subunit 2 family. As to quaternary structure, component of the cytochrome c oxidase (complex IV, CIV), a multisubunit enzyme composed of a catalytic core of 3 subunits and several supernumerary subunits. The complex exists as a monomer or a dimer and forms supercomplexes (SCs) in the inner mitochondrial membrane with ubiquinol-cytochrome c oxidoreductase (cytochrome b-c1 complex, complex III, CIII). Cu cation serves as cofactor.

Its subcellular location is the mitochondrion inner membrane. It catalyses the reaction 4 Fe(II)-[cytochrome c] + O2 + 8 H(+)(in) = 4 Fe(III)-[cytochrome c] + 2 H2O + 4 H(+)(out). Its function is as follows. Component of the cytochrome c oxidase, the last enzyme in the mitochondrial electron transport chain which drives oxidative phosphorylation. The respiratory chain contains 3 multisubunit complexes succinate dehydrogenase (complex II, CII), ubiquinol-cytochrome c oxidoreductase (cytochrome b-c1 complex, complex III, CIII) and cytochrome c oxidase (complex IV, CIV), that cooperate to transfer electrons derived from NADH and succinate to molecular oxygen, creating an electrochemical gradient over the inner membrane that drives transmembrane transport and the ATP synthase. Cytochrome c oxidase is the component of the respiratory chain that catalyzes the reduction of oxygen to water. Electrons originating from reduced cytochrome c in the intermembrane space (IMS) are transferred via the dinuclear copper A center (CU(A)) of subunit 2 and heme A of subunit 1 to the active site in subunit 1, a binuclear center (BNC) formed by heme A3 and copper B (CU(B)). The BNC reduces molecular oxygen to 2 water molecules using 4 electrons from cytochrome c in the IMS and 4 protons from the mitochondrial matrix. The chain is Cytochrome c oxidase subunit 2 from Pneumocystis carinii.